Reading from the N-terminus, the 347-residue chain is NADH-ubiquinone oxidoreductase chain 2 (347 aa).

11 helical membrane passes run 3–23, 25–45, 59–79, 96–116, 122–142, 149–169, 178–198, 201–221, 237–257, 274–294, and 326–346; these read PLIF…VMTT, HWVM…PILM, YFLT…INLT, IIMT…FWVP, VQLS…MSIL, INLD…GWGG, ILAY…VYNP, ALLN…MLMV, MPLL…LPPL, DSMI…YFYM, and LSPL…LALL.

It belongs to the complex I subunit 2 family. As to quaternary structure, core subunit of respiratory chain NADH dehydrogenase (Complex I) which is composed of 45 different subunits. Interacts with TMEM242.

It localises to the mitochondrion inner membrane. The catalysed reaction is a ubiquinone + NADH + 5 H(+)(in) = a ubiquinol + NAD(+) + 4 H(+)(out). Core subunit of the mitochondrial membrane respiratory chain NADH dehydrogenase (Complex I) which catalyzes electron transfer from NADH through the respiratory chain, using ubiquinone as an electron acceptor. Essential for the catalytic activity and assembly of complex I. The polypeptide is NADH-ubiquinone oxidoreductase chain 2 (Nyctimene aello (Broad-striped tube-nosed fruit bat)).